We begin with the raw amino-acid sequence, 737 residues long: 1,4-alpha-glucan branching enzyme GlgB (737 aa).

Aspartate 399 acts as the Nucleophile in catalysis. Glutamate 452 functions as the Proton donor in the catalytic mechanism.

This sequence belongs to the glycosyl hydrolase 13 family. GlgB subfamily. As to quaternary structure, monomer.

It carries out the reaction Transfers a segment of a (1-&gt;4)-alpha-D-glucan chain to a primary hydroxy group in a similar glucan chain.. It participates in glycan biosynthesis; glycogen biosynthesis. Its function is as follows. Catalyzes the formation of the alpha-1,6-glucosidic linkages in glycogen by scission of a 1,4-alpha-linked oligosaccharide from growing alpha-1,4-glucan chains and the subsequent attachment of the oligosaccharide to the alpha-1,6 position. The protein is 1,4-alpha-glucan branching enzyme GlgB of Chlamydia muridarum (strain MoPn / Nigg).